The primary structure comprises 446 residues: Tubulin gamma chain (446 aa).

142–148 (AGGTGSG) is a GTP binding site.

Belongs to the tubulin family.

The protein localises to the cytoplasm. It is found in the cytoskeleton. Its subcellular location is the microtubule organizing center. It localises to the spindle pole body. In terms of biological role, tubulin is the major constituent of microtubules. The gamma chain is found at microtubule organizing centers (MTOC) such as the spindle poles or the centrosome, suggesting that it is involved in the minus-end nucleation of microtubule assembly. In Schizosaccharomyces japonicus (Fission yeast), this protein is Tubulin gamma chain (tug1).